Here is a 264-residue protein sequence, read N- to C-terminus: Proteasome assembly chaperone 2 (264 aa).

At Thr137 the chain carries Phosphothreonine.

This sequence belongs to the PSMG2 family. In terms of assembly, forms a heterodimer with PSMG1. The PSMG1-PSMG2 heterodimer interacts directly with the PSMA5 and PSMA7 proteasome alpha subunits. Post-translationally, degraded by the proteasome upon completion of 20S proteasome maturation. Widely expressed with highest levels in lung, brain and colon. Moderately expressed in muscle, stomach, spleen and heart. Weakly expressed in small intestine, pancreas and liver. Highly expressed in hepatocellular carcinomas with low levels in surrounding liver tissue.

The protein resides in the nucleus. Its function is as follows. Chaperone protein which promotes assembly of the 20S proteasome as part of a heterodimer with PSMG1. The PSMG1-PSMG2 heterodimer binds to the PSMA5 and PSMA7 proteasome subunits, promotes assembly of the proteasome alpha subunits into the heteroheptameric alpha ring and prevents alpha ring dimerization. The polypeptide is Proteasome assembly chaperone 2 (Homo sapiens (Human)).